A 169-amino-acid chain; its full sequence is GTP-dependent dephospho-CoA kinase (169 aa).

4 residues coordinate GTP: D45, D64, K66, and E121.

The protein belongs to the GTP-dependent DPCK family.

It carries out the reaction 3'-dephospho-CoA + GTP = GDP + CoA + H(+). Its pathway is cofactor biosynthesis; coenzyme A biosynthesis. Catalyzes the GTP-dependent phosphorylation of the 3'-hydroxyl group of dephosphocoenzyme A to form coenzyme A (CoA). The protein is GTP-dependent dephospho-CoA kinase of Methanosphaera stadtmanae (strain ATCC 43021 / DSM 3091 / JCM 11832 / MCB-3).